Here is a 109-residue protein sequence, read N- to C-terminus: ATP-dependent Clp protease adapter protein ClpS 2 (109 aa).

The segment at 1 to 24 (MAGDGGRSGPSTPSTSVITKTKPR) is disordered.

It belongs to the ClpS family. In terms of assembly, binds to the N-terminal domain of the chaperone ClpA.

Involved in the modulation of the specificity of the ClpAP-mediated ATP-dependent protein degradation. This Rhodopseudomonas palustris (strain ATCC BAA-98 / CGA009) protein is ATP-dependent Clp protease adapter protein ClpS 2.